Here is a 178-residue protein sequence, read N- to C-terminus: Ribosome maturation factor RimP (178 aa).

This sequence belongs to the RimP family.

The protein localises to the cytoplasm. Required for maturation of 30S ribosomal subunits. The polypeptide is Ribosome maturation factor RimP (Mycolicibacterium paratuberculosis (strain ATCC BAA-968 / K-10) (Mycobacterium paratuberculosis)).